Consider the following 401-residue polypeptide: Short chain dehydrogenase/reductase dpchH (401 aa).

Residue asparagine 16 is glycosylated (N-linked (GlcNAc...) asparagine). Residues 51-71 (VRAVDVLFGTFLYVPLGILFL) traverse the membrane as a helical segment. Residues 72 to 80 (KKSLSGFGD), 99 to 100 (TG), and 118 to 120 (AKV) contribute to the NAD(+) site. A glycan (N-linked (GlcNAc...) asparagine) is linked at asparagine 242. Tyrosine 275 functions as the Proton acceptor in the catalytic mechanism. Residues 275–279 (YGTSK) and 308–310 (GTI) contribute to the NAD(+) site. Asparagine 386 is a glycosylation site (N-linked (GlcNAc...) asparagine).

It localises to the membrane. It participates in secondary metabolite biosynthesis; terpenoid biosynthesis. Its function is as follows. Short chain dehydrogenase/reductase; part of the gene cluster that mediates the biosynthesis of the diterpenoid pyrones higginsianins A and B. The first step of the pathway is the synthesis of the alpha-pyrone moiety by the polyketide synthase dpchA via condensation of one acetyl-CoA starter unit with 3 malonyl-CoA units and 2 methylations. The alpha-pyrone is then combined with geranylgeranyl pyrophosphate (GGPP) formed by the GGPP synthase dpchD through the action of the prenyltransferase dpchC to yield a linear alpha-pyrone diterpenoid. Subsequent steps in the diterpenoid pyrone biosynthetic pathway involve the decalin core formation, which is initiated by the epoxidation of the C10-C11 olefin by the FAD-dependent oxidoreductase dpchE, and is followed by a cyclization cascade catalyzed by the terpene cyclase dpchB. The short chain dehydrogenase/reductase dpchG then oxidizes the 8S hydroxy group to a ketone and the short chain dehydrogenase/reductase dpchH reduces the ketone to the 8R hydroxy group to yield higginsianin B. Finally, the FAD-dependent oxidoreductase dpchF converts higginsianin B into higginsianin A. In Colletotrichum higginsianum (strain IMI 349063) (Crucifer anthracnose fungus), this protein is Short chain dehydrogenase/reductase dpchH.